Here is a 166-residue protein sequence, read N- to C-terminus: Thioredoxin, mitochondrial (166 aa).

Residues 1–59 constitute a mitochondrion transit peptide; that stretch reads MAQRLLLRRFLTSIISGKPSQSRWAPVASRALQTPQYSPGYLTVTPSQARSIYTTRVCS. The region spanning 61–166 is the Thioredoxin domain; the sequence is TFNIQDGPDF…LEAFLKKLIG (106 aa). Catalysis depends on nucleophile residues C90 and C93. Residues C90 and C93 are joined by a disulfide bond. Position 152 is an N6-acetyllysine; alternate (K152). Residue K152 is modified to N6-succinyllysine; alternate.

The protein belongs to the thioredoxin family. Monomer.

The protein localises to the mitochondrion. In terms of biological role, important for the control of mitochondrial reactive oxygen species homeostasis, apoptosis regulation and cell viability. Is involved in various redox reactions including the reduction of protein disulfide bonds, through the reversible oxidation of its active center dithiol to a disulfide. The protein is Thioredoxin, mitochondrial (TXN2) of Bos taurus (Bovine).